A 249-amino-acid polypeptide reads, in one-letter code: 23S rRNA (guanosine-2'-O-)-methyltransferase RlmB (249 aa).

S-adenosyl-L-methionine is bound by residues Gly200, Ile220, and Leu229.

Belongs to the class IV-like SAM-binding methyltransferase superfamily. RNA methyltransferase TrmH family. RlmB subfamily.

Its subcellular location is the cytoplasm. The enzyme catalyses guanosine(2251) in 23S rRNA + S-adenosyl-L-methionine = 2'-O-methylguanosine(2251) in 23S rRNA + S-adenosyl-L-homocysteine + H(+). Specifically methylates the ribose of guanosine 2251 in 23S rRNA. The sequence is that of 23S rRNA (guanosine-2'-O-)-methyltransferase RlmB from Xanthomonas campestris pv. campestris (strain ATCC 33913 / DSM 3586 / NCPPB 528 / LMG 568 / P 25).